The sequence spans 741 residues: MAASSSLSTLSHHQTLLSHPKTHLPTTPASSLLVPTTSSKVNGVLLKSTSSSRRLRVGSASAVVRAAAVEALESTDIDQLVEKSVNTIRFLAIDAVEKANSGHPGLPMGCAPMGHILYDEIMRYNPKNPYWFNRDRFVLSAGHGCMLQYALLHLAGYDSVLEEDLKTFRQWGSRIPGHPENFETPGVEVTTGPLGQGIANAVGLALAEKHLAARFNKPDAEIVDHYTYVILGDGCQMEGIAQEACSLAGHWGLGKLIAFYDDNHISIDGDTAIAFTESVDLRFEALGWHVIWVKNGNTGYDEIRAAIKEAKTVTDKPTLIKVTTTIGFGSPNKSNSYSVHGSALGSKEVEATRQNLGWPYEPFHVPEEVKKHWSRHTPEGASLEAEWNTKFAEYEKKYPEDATEFKSITTGEFPAGWEKALPTYTPETPGDATRNLSQQCLNALAKVIPGLLGGSADLASSNMTLLKMFGDFRRTHRKKETFRFGVREHGMGAICNGICLHSPGFVPYCATFFVFTDYMRGAMRISALSEAGVIYVMTHDSIGLGEDGPTHQPIEALSKFPAMPNILMLRPADGNETAGSYKVAVENRKTPSILALSRKKLPNLPGTSIEGVEKGGYTITDNSSGNKPDVILIGTGSELEIAAKAGDELRKEGKAVRVVSFVSWELFEKQSDEYKESVLPSDVTARVSIEAGSTFGWHKIVGSKGKAIGIDKFGASAPAGKIYQEYGITVEAVVEAAKSVC.

Residues 1-19 (MAASSSLSTLSHHQTLLSH) show a composition bias toward low complexity. The interval 1–33 (MAASSSLSTLSHHQTLLSHPKTHLPTTPASSLL) is disordered. Residues 1–66 (MAASSSLSTL…VGSASAVVRA (66 aa)) constitute a chloroplast transit peptide. Over residues 24 to 33 (LPTTPASSLL) the composition is skewed to polar residues. Residue His103 coordinates substrate. Thiamine diphosphate contacts are provided by residues His143 and 192-194 (GPL). Asp233 is a binding site for Mg(2+). 2 residues coordinate thiamine diphosphate: Gly234 and Asn263. The Mg(2+) site is built by Asn263 and Ile265. Residues His340, Arg434, and Ser461 each coordinate substrate. His340 serves as a coordination point for thiamine diphosphate. Thiamine diphosphate-binding residues include Glu488 and Phe515. Glu488 serves as the catalytic Proton donor. The substrate site is built by His539, Asp547, and Arg598.

The protein belongs to the transketolase family. Homodimer. The cofactor is Mg(2+). Ca(2+) serves as cofactor. Requires Mn(2+) as cofactor. It depends on Co(2+) as a cofactor. Thiamine diphosphate is required as a cofactor.

It localises to the plastid. It is found in the chloroplast thylakoid membrane. The enzyme catalyses D-sedoheptulose 7-phosphate + D-glyceraldehyde 3-phosphate = aldehydo-D-ribose 5-phosphate + D-xylulose 5-phosphate. Its pathway is carbohydrate biosynthesis; Calvin cycle. Functionally, catalyzes the reversible transfer of a two-carbon ketol group from fructose-6-phosphate or sedoheptulose-7-phosphate to glyceraldehyde-3-phosphate to yield xylulose-5-phosphate and erythrose-4-phosphate or ribose-5-phosphate, respectively. This Spinacia oleracea (Spinach) protein is Transketolase, chloroplastic.